Reading from the N-terminus, the 113-residue chain is Large ribosomal subunit protein eL36z (113 aa).

Residues 78 to 88 (RKLGTHKRAKR) are compositionally biased toward basic residues. Residues 78–113 (RKLGTHKRAKRKREEMSSVLRKMRSLGGAAAAEKKM) form a disordered region.

This sequence belongs to the eukaryotic ribosomal protein eL36 family.

This is Large ribosomal subunit protein eL36z (RPL36A) from Arabidopsis thaliana (Mouse-ear cress).